The following is a 256-amino-acid chain: Thiazole synthase (256 aa).

Catalysis depends on K95, which acts as the Schiff-base intermediate with DXP. Residues G156, 182-183 (AG), and 204-205 (NT) each bind 1-deoxy-D-xylulose 5-phosphate.

Belongs to the ThiG family. Homotetramer. Forms heterodimers with either ThiH or ThiS.

The protein resides in the cytoplasm. It catalyses the reaction [ThiS sulfur-carrier protein]-C-terminal-Gly-aminoethanethioate + 2-iminoacetate + 1-deoxy-D-xylulose 5-phosphate = [ThiS sulfur-carrier protein]-C-terminal Gly-Gly + 2-[(2R,5Z)-2-carboxy-4-methylthiazol-5(2H)-ylidene]ethyl phosphate + 2 H2O + H(+). Its pathway is cofactor biosynthesis; thiamine diphosphate biosynthesis. Catalyzes the rearrangement of 1-deoxy-D-xylulose 5-phosphate (DXP) to produce the thiazole phosphate moiety of thiamine. Sulfur is provided by the thiocarboxylate moiety of the carrier protein ThiS. In vitro, sulfur can be provided by H(2)S. This chain is Thiazole synthase, found in Salmonella choleraesuis (strain SC-B67).